The primary structure comprises 270 residues: Triosephosphate isomerase (270 aa).

A substrate-binding site is contributed by 27–29; sequence NWK. His114 acts as the Electrophile in catalysis. The active-site Proton acceptor is Glu184. Substrate is bound by residues Gly190, Ser230, and 251 to 252; that span reads GG.

Belongs to the triosephosphate isomerase family. Homodimer.

The protein localises to the cytoplasm. The catalysed reaction is D-glyceraldehyde 3-phosphate = dihydroxyacetone phosphate. The protein operates within carbohydrate biosynthesis; gluconeogenesis. It participates in carbohydrate degradation; glycolysis; D-glyceraldehyde 3-phosphate from glycerone phosphate: step 1/1. Involved in the gluconeogenesis. Catalyzes stereospecifically the conversion of dihydroxyacetone phosphate (DHAP) to D-glyceraldehyde-3-phosphate (G3P). This is Triosephosphate isomerase from Chlamydia muridarum (strain MoPn / Nigg).